We begin with the raw amino-acid sequence, 422 residues long: Dihydrolipoyllysine-residue succinyltransferase component of 2-oxoglutarate dehydrogenase complex (422 aa).

One can recognise a Lipoyl-binding domain in the interval 1–76 (MPEVKVPELA…EVGQAIAVIG (76 aa)). Lys-42 carries the post-translational modification N6-lipoyllysine. The interval 77–184 (EGSGNASKEN…APAKEEKKYN (108 aa)) is disordered. Polar residues-rich tracts occupy residues 80 to 94 (GNAS…TPQQ) and 114 to 130 (EVNQ…NATP). Positions 127–163 (NATPSARRYARENGVNLAEVSPKTNDVVRKEDIDKKQ) constitute a Peripheral subunit-binding (PSBD) domain. The segment covering 152 to 163 (DVVRKEDIDKKQ) has biased composition (basic and acidic residues). Over residues 164–176 (QAPASTQTTQQAP) the composition is skewed to low complexity. Residues His-393 and Asp-397 contribute to the active site.

This sequence belongs to the 2-oxoacid dehydrogenase family. As to quaternary structure, forms a 24-polypeptide structural core with octahedral symmetry. Part of the 2-oxoglutarate dehydrogenase (OGDH) complex composed of E1 (2-oxoglutarate dehydrogenase), E2 (dihydrolipoamide succinyltransferase) and E3 (dihydrolipoamide dehydrogenase); the complex contains multiple copies of the three enzymatic components (E1, E2 and E3). (R)-lipoate serves as cofactor.

The enzyme catalyses N(6)-[(R)-dihydrolipoyl]-L-lysyl-[protein] + succinyl-CoA = N(6)-[(R)-S(8)-succinyldihydrolipoyl]-L-lysyl-[protein] + CoA. The protein operates within amino-acid degradation; L-lysine degradation via saccharopine pathway; glutaryl-CoA from L-lysine: step 6/6. Its function is as follows. E2 component of the 2-oxoglutarate dehydrogenase (OGDH) complex which catalyzes the second step in the conversion of 2-oxoglutarate to succinyl-CoA and CO(2). The protein is Dihydrolipoyllysine-residue succinyltransferase component of 2-oxoglutarate dehydrogenase complex (odhB) of Staphylococcus aureus (strain bovine RF122 / ET3-1).